A 251-amino-acid chain; its full sequence is Eukaryotic translation initiation factor 3 subunit K (251 aa).

The region spanning 46 to 224 is the PCI domain; sequence FDCYANLALL…VKVPTNKENE (179 aa).

The protein belongs to the eIF-3 subunit K family. In terms of assembly, component of the eukaryotic translation initiation factor 3 (eIF-3) complex.

The protein resides in the cytoplasm. Functionally, component of the eukaryotic translation initiation factor 3 (eIF-3) complex, which is involved in protein synthesis of a specialized repertoire of mRNAs and, together with other initiation factors, stimulates binding of mRNA and methionyl-tRNAi to the 40S ribosome. The eIF-3 complex specifically targets and initiates translation of a subset of mRNAs involved in cell proliferation. This Aspergillus oryzae (strain ATCC 42149 / RIB 40) (Yellow koji mold) protein is Eukaryotic translation initiation factor 3 subunit K.